The chain runs to 402 residues: Serine/threonine transporter SstT (402 aa).

The next 9 helical transmembrane spans lie at isoleucine 19–leucine 39, leucine 43–alanine 63, threonine 86–leucine 106, alanine 138–methionine 158, valine 179–isoleucine 199, leucine 212–isoleucine 232, isoleucine 287–leucine 307, valine 327–isoleucine 347, and phenylalanine 354–isoleucine 374.

It belongs to the dicarboxylate/amino acid:cation symporter (DAACS) (TC 2.A.23) family.

The protein resides in the cell membrane. It carries out the reaction L-serine(in) + Na(+)(in) = L-serine(out) + Na(+)(out). It catalyses the reaction L-threonine(in) + Na(+)(in) = L-threonine(out) + Na(+)(out). Involved in the import of serine and threonine into the cell, with the concomitant import of sodium (symport system). In Streptococcus agalactiae serotype III (strain NEM316), this protein is Serine/threonine transporter SstT.